The sequence spans 366 residues: Protein-glutamate methylesterase/protein-glutamine glutaminase of group 2 operon (366 aa).

The Response regulatory domain maps to 19 to 136; that stretch reads RVLIVDDSAM…GQGLPAIMRD (118 aa). D70 carries the post-translational modification 4-aspartylphosphate. In terms of domain architecture, CheB-type methylesterase spans 162-356; the sequence is PGASEDWIHA…ARMMLAAAAD (195 aa). Catalysis depends on residues S175, H201, and D298.

Belongs to the CheB family. Post-translationally, phosphorylated by CheA. Phosphorylation of the N-terminal regulatory domain activates the methylesterase activity.

The protein localises to the cytoplasm. It carries out the reaction [protein]-L-glutamate 5-O-methyl ester + H2O = L-glutamyl-[protein] + methanol + H(+). It catalyses the reaction L-glutaminyl-[protein] + H2O = L-glutamyl-[protein] + NH4(+). Functionally, involved in chemotaxis. Part of a chemotaxis signal transduction system that modulates chemotaxis in response to various stimuli. Catalyzes the demethylation of specific methylglutamate residues introduced into the chemoreceptors (methyl-accepting chemotaxis proteins or MCP) by CheR. Also mediates the irreversible deamidation of specific glutamine residues to glutamic acid. This chain is Protein-glutamate methylesterase/protein-glutamine glutaminase of group 2 operon, found in Cereibacter sphaeroides (Rhodobacter sphaeroides).